We begin with the raw amino-acid sequence, 166 residues long: NAD(P)H-quinone oxidoreductase subunit I, chloroplastic (166 aa).

4Fe-4S ferredoxin-type domains follow at residues 55 to 84 (GRIH…VDWK) and 95 to 124 (LNYS…MTEE). The [4Fe-4S] cluster site is built by C64, C67, C70, C74, C104, C107, C110, and C114.

It belongs to the complex I 23 kDa subunit family. In terms of assembly, NDH is composed of at least 16 different subunits, 5 of which are encoded in the nucleus. [4Fe-4S] cluster serves as cofactor.

Its subcellular location is the plastid. The protein localises to the chloroplast thylakoid membrane. The catalysed reaction is a plastoquinone + NADH + (n+1) H(+)(in) = a plastoquinol + NAD(+) + n H(+)(out). It carries out the reaction a plastoquinone + NADPH + (n+1) H(+)(in) = a plastoquinol + NADP(+) + n H(+)(out). Functionally, NDH shuttles electrons from NAD(P)H:plastoquinone, via FMN and iron-sulfur (Fe-S) centers, to quinones in the photosynthetic chain and possibly in a chloroplast respiratory chain. The immediate electron acceptor for the enzyme in this species is believed to be plastoquinone. Couples the redox reaction to proton translocation, and thus conserves the redox energy in a proton gradient. The chain is NAD(P)H-quinone oxidoreductase subunit I, chloroplastic from Bahiopsis tomentosa (Tecote).